Here is a 222-residue protein sequence, read N- to C-terminus: Adenylate kinase (222 aa).

Residue 10-15 (GAGKGT) coordinates ATP. The interval 30–59 (STGDMLRAAVKAGTPLGIEAKKVMDAGGLV) is NMP. Residues Thr-31, Arg-36, 57–59 (GLV), 85–88 (GFPR), and Gln-92 contribute to the AMP site. The tract at residues 122-159 (GRRVHVASGRTYHVKYNPPKNEGQDDETGDPLIQRDDD) is LID. Residues Arg-123 and 132 to 133 (TY) contribute to the ATP site. The disordered stretch occupies residues 135–162 (VKYNPPKNEGQDDETGDPLIQRDDDKEE). Residues Arg-156 and Arg-167 each contribute to the AMP site. Gly-207 lines the ATP pocket.

Belongs to the adenylate kinase family. In terms of assembly, monomer.

Its subcellular location is the cytoplasm. The catalysed reaction is AMP + ATP = 2 ADP. Its pathway is purine metabolism; AMP biosynthesis via salvage pathway; AMP from ADP: step 1/1. Its function is as follows. Catalyzes the reversible transfer of the terminal phosphate group between ATP and AMP. Plays an important role in cellular energy homeostasis and in adenine nucleotide metabolism. The polypeptide is Adenylate kinase (Ralstonia nicotianae (strain ATCC BAA-1114 / GMI1000) (Ralstonia solanacearum)).